The chain runs to 166 residues: UPF0251 protein UNCMA_27150 (166 aa).

It belongs to the UPF0251 family.

This is UPF0251 protein UNCMA_27150 from Methanocella arvoryzae (strain DSM 22066 / NBRC 105507 / MRE50).